The chain runs to 317 residues: Taste receptor type 2 member 7 (317 aa).

The Extracellular segment spans residues 1-9; sequence MTDKVQTTL. A helical transmembrane segment spans residues 10-30; the sequence is LFLAIGEFSVGILGNAFIGLV. Residues 31–55 are Cytoplasmic-facing; the sequence is NCMDWVKKRKIASIDLILTSLAISR. The chain crosses the membrane as a helical span at residues 56-76; it reads ICLLCVILLDCFMLVLYPDVY. The Extracellular segment spans residues 77 to 94; that stretch reads ATGKQMRIIDFFWTLTNH. The helical transmembrane segment at 95-115 threads the bilayer; the sequence is LSIWFATCLSIYYFFKIANFF. Residues 116–128 lie on the Cytoplasmic side of the membrane; that stretch reads HPLFLWMKWRIDR. A helical membrane pass occupies residues 129–149; the sequence is VISWILLGCMVLSVFINLPAT. The Extracellular segment spans residues 150–187; the sequence is ENLNADFRRCVKAKRKTNLTWSCRVTKAQHASTKLFLN. Asparagine 167 carries an N-linked (GlcNAc...) asparagine glycan. Residues 188 to 208 form a helical membrane-spanning segment; it reads LVTLLPFSVCLVSFFLLILSL. Residues 209–235 lie on the Cytoplasmic side of the membrane; that stretch reads WRHIRRMQLSATGCRDPSTEAHVRALK. Residues 236–256 traverse the membrane as a helical segment; sequence AVISFLFLFIAYYLSFLIATS. The Extracellular segment spans residues 257–266; that stretch reads SYFIPETELA. Residues 267–287 traverse the membrane as a helical segment; sequence VIFGEFIALIYPSSHSFILIL. The Cytoplasmic portion of the chain corresponds to 288-317; sequence GNNKLRRASLKVLWTVMSILKGRKFQQKQI.

It belongs to the G-protein coupled receptor T2R family.

The protein resides in the membrane. Its function is as follows. Gustducin-coupled receptor implicated in the perception of bitter compounds in the oral cavity and the gastrointestinal tract. Signals through PLCB2 and the calcium-regulated cation channel TRPM5. The chain is Taste receptor type 2 member 7 (TAS2R7) from Papio hamadryas (Hamadryas baboon).